The sequence spans 262 residues: Hydroxyethylthiazole kinase (262 aa).

Met39 contacts substrate. Residues Lys115 and Thr160 each coordinate ATP. Gly187 lines the substrate pocket.

This sequence belongs to the Thz kinase family. Mg(2+) is required as a cofactor.

It catalyses the reaction 5-(2-hydroxyethyl)-4-methylthiazole + ATP = 4-methyl-5-(2-phosphooxyethyl)-thiazole + ADP + H(+). Its pathway is cofactor biosynthesis; thiamine diphosphate biosynthesis; 4-methyl-5-(2-phosphoethyl)-thiazole from 5-(2-hydroxyethyl)-4-methylthiazole: step 1/1. Its function is as follows. Catalyzes the phosphorylation of the hydroxyl group of 4-methyl-5-beta-hydroxyethylthiazole (THZ). The polypeptide is Hydroxyethylthiazole kinase (Staphylococcus epidermidis (strain ATCC 35984 / DSM 28319 / BCRC 17069 / CCUG 31568 / BM 3577 / RP62A)).